Consider the following 275-residue polypeptide: 3-methyl-2-oxobutanoate hydroxymethyltransferase (275 aa).

Residues D49 and D88 each coordinate Mg(2+). 3-methyl-2-oxobutanoate contacts are provided by residues 49–50 (DS), D88, and K118. Position 120 (E120) interacts with Mg(2+). Catalysis depends on E187, which acts as the Proton acceptor.

The protein belongs to the PanB family. Homodecamer; pentamer of dimers. The cofactor is Mg(2+).

Its subcellular location is the cytoplasm. The enzyme catalyses 3-methyl-2-oxobutanoate + (6R)-5,10-methylene-5,6,7,8-tetrahydrofolate + H2O = 2-dehydropantoate + (6S)-5,6,7,8-tetrahydrofolate. The protein operates within cofactor biosynthesis; (R)-pantothenate biosynthesis; (R)-pantoate from 3-methyl-2-oxobutanoate: step 1/2. Catalyzes the reversible reaction in which hydroxymethyl group from 5,10-methylenetetrahydrofolate is transferred onto alpha-ketoisovalerate to form ketopantoate. The chain is 3-methyl-2-oxobutanoate hydroxymethyltransferase from Nitrobacter hamburgensis (strain DSM 10229 / NCIMB 13809 / X14).